A 349-amino-acid polypeptide reads, in one-letter code: Probable G-protein coupled receptor 21 (349 aa).

The Extracellular portion of the chain corresponds to 1-32; it reads MNSTLDGNQSSHPFCLLAFGYLETVNFCLLEV. N-linked (GlcNAc...) asparagine glycosylation is found at N2 and N8. Residues 33-53 traverse the membrane as a helical segment; that stretch reads LIIVFLTVLIISGNIIVIFVF. The Cytoplasmic segment spans residues 54–75; the sequence is HCAPLLNHHTTSYFIQTMAYAD. The helical transmembrane segment at 76 to 96 threads the bilayer; that stretch reads LFVGVSCVVPSLSLLHHPLPV. Residues 97 to 104 lie on the Extracellular side of the membrane; the sequence is EESLTCQI. A helical membrane pass occupies residues 105-125; it reads FGFVVSVLKSVSMASLACISI. The Cytoplasmic portion of the chain corresponds to 126–147; the sequence is DRYIAITKPLTYNTLVTPWRLR. A helical transmembrane segment spans residues 148–168; that stretch reads LCIFLIWLYSTLVFLPSFFHW. Over 169-191 the chain is Extracellular; that stretch reads GKPGYHGDVFQWCAESWHTDSYF. The helical transmembrane segment at 192-212 threads the bilayer; the sequence is TLFIVMMLYAPAALIVCFTYF. Over 213 to 252 the chain is Cytoplasmic; the sequence is NIFRICQQHTKDISERQARFSSQSGETGEVQACPDKRYAM. The helical transmembrane segment at 253-273 threads the bilayer; the sequence is VLFRITSVFYILWLPYIIYFL. The Extracellular segment spans residues 274–283; it reads LESSTGHSNR. A helical transmembrane segment spans residues 284–304; sequence FASFLTTWLAISNSFCNCVIY. Topologically, residues 305-349 are cytoplasmic; the sequence is SLSNSVFQRGLKRLSGAMCTSCASQTTANDPYTVRSKGPLNGCHI.

It belongs to the G-protein coupled receptor 1 family. In terms of tissue distribution, not detected in the brain regions thalamus, putamen, caudate, frontal cortex, pons, hypothalamus, hippocampus.

It localises to the cell membrane. Functionally, orphan receptor. This chain is Probable G-protein coupled receptor 21 (GPR21), found in Homo sapiens (Human).